Here is a 120-residue protein sequence, read N- to C-terminus: MISKIDKNKVRLKRHARVRTKLSGTAEKPRLNVYRSNKHIYAQIIDDVKGETLVQASSKDKDIASDSTSKVDLSTKVGEAIAKKASDKGIKEIVFDRGGYLYHGRVKALAEAARESGLEF.

The protein belongs to the universal ribosomal protein uL18 family. In terms of assembly, part of the 50S ribosomal subunit; part of the 5S rRNA/L5/L18/L25 subcomplex. Contacts the 5S and 23S rRNAs.

Its function is as follows. This is one of the proteins that bind and probably mediate the attachment of the 5S RNA into the large ribosomal subunit, where it forms part of the central protuberance. The sequence is that of Large ribosomal subunit protein uL18 from Staphylococcus haemolyticus (strain JCSC1435).